Here is a 438-residue protein sequence, read N- to C-terminus: Putative ZDHHC-type palmitoyltransferase 7 (438 aa).

2 N-linked (GlcNAc...) asparagine glycosylation sites follow: asparagine 12 and asparagine 13. Helical transmembrane passes span 48–68 and 77–97; these read IFCL…GTIL and YFYL…YFLI. N-linked (GlcNAc...) asparagine glycosylation is found at asparagine 119, asparagine 144, and asparagine 157. Residues 183–239 are disordered; that stretch reads EDSINDDTITTTTTTTTTTSTSTIPEISNDDDDNNNENNNDNVNNRNNNNSNGEKED. Low complexity-rich tracts occupy residues 190-206 and 218-234; these read TITT…TSTI and NENN…NNSN. The N-linked (GlcNAc...) asparagine glycan is linked to asparagine 231. The region spanning 249 to 299 is the DHHC domain; sequence YFCKKCLVDIPLRTKHCVKCNRCVLKYDHHCVFIGGCVGLNNHKNFLLFLL. Transmembrane regions (helical) follow at residues 294–314 and 330–350; these read FLLF…IIVT and IAII…FALF. An N-linked (GlcNAc...) asparagine glycan is attached at asparagine 360.

It belongs to the DHHC palmitoyltransferase family.

The protein resides in the membrane. It catalyses the reaction L-cysteinyl-[protein] + hexadecanoyl-CoA = S-hexadecanoyl-L-cysteinyl-[protein] + CoA. This is Putative ZDHHC-type palmitoyltransferase 7 from Dictyostelium discoideum (Social amoeba).